The chain runs to 855 residues: Protein KRI1 homolog (855 aa).

6 disordered regions span residues 47–67, 82–117, 130–196, 312–342, 424–453, and 589–855; these read VSES…VDPK, KDPC…KAKP, EHNG…KTKE, SLRR…MKEL, YDPR…CDYD, and KSLY…KKDN. The span at 48 to 64 shows a compositional bias: acidic residues; that stretch reads SESEFDSDSSSSEEDEV. The segment covering 82 to 91 has biased composition (basic and acidic residues); sequence KDPCIYDKGT. A phosphoserine mark is found at Ser95, Ser97, Ser98, Ser137, and Ser138. Over residues 160 to 176 the composition is skewed to basic and acidic residues; sequence EEERRLKAEFRKVMNKE. Residue Ser179 is modified to Phosphoserine. Residues 307–362 are a coiled coil; it reads RTIEQSLRRTDDKRKEKRKELKERKDQEKQQKMKELELVKEMKRKEIDEKIRKLKA. The segment covering 441 to 452 has biased composition (acidic residues); sequence CEDDDFNMDCDY. Over residues 609-619 the composition is skewed to low complexity; the sequence is VTPAEATAPAE. The span at 630–640 shows a compositional bias: basic residues; that stretch reads KSKRKRLKRKA. Composition is skewed to basic and acidic residues over residues 650–664 and 674–692; these read VLKE…KEAD and SSKK…DANQ. 3 stretches are compositionally biased toward polar residues: residues 720–748, 756–773, and 792–805; these read VQNG…TTES, SNGN…QQRQ, and ANGT…NQKP. The span at 812-826 shows a compositional bias: low complexity; sequence KKTNNFKAKNKQNNN. The span at 842-855 shows a compositional bias: basic residues; it reads RKFHKREKYGKKDN.

Belongs to the KRI1 family.

The polypeptide is Protein KRI1 homolog (Drosophila melanogaster (Fruit fly)).